The following is a 923-amino-acid chain: Protocadherin gamma-B4 (923 aa).

The signal sequence occupies residues 1–30 (MGSGAGELGRAERLPVLFLFLLSLFCPALC). Cadherin domains are found at residues 31–133 (EQIR…TPKF), 134–242 (TQNS…APVF), 243–345 (SQDI…APEV), 346–450 (IFQS…APVF), 451–560 (SQSS…APRV), and 568–673 (DGSA…LPDI). Residues 31–689 (EQIRYRIPEE…SDLEAELQFY (659 aa)) lie on the Extracellular side of the membrane. Asparagine 417 and asparagine 543 each carry an N-linked (GlcNAc...) asparagine glycan. A helical transmembrane segment spans residues 690-710 (LVVALALISVLFLVAMILAIA). Residues 711–923 (LRLRRSSSPA…KKKSGKKEKK (213 aa)) lie on the Cytoplasmic side of the membrane. Disordered stretches follow at residues 797–832 (SHQQAPPNTDWRFSQAQRPGTSGSQNGDDTGTWPNN) and 893–923 (ATLTNAAGKRDGKAPAGGNGNKKKSGKKEKK). Residues 913–923 (NKKKSGKKEKK) are compositionally biased toward basic residues.

It is found in the cell membrane. Functionally, potential calcium-dependent cell-adhesion protein. May be involved in the establishment and maintenance of specific neuronal connections in the brain. This is Protocadherin gamma-B4 (PCDHGB4) from Pan troglodytes (Chimpanzee).